The chain runs to 351 residues: Phosphate acyltransferase (351 aa).

This sequence belongs to the PlsX family. Homodimer. Probably interacts with PlsY.

It localises to the cytoplasm. The catalysed reaction is a fatty acyl-[ACP] + phosphate = an acyl phosphate + holo-[ACP]. It functions in the pathway lipid metabolism; phospholipid metabolism. In terms of biological role, catalyzes the reversible formation of acyl-phosphate (acyl-PO(4)) from acyl-[acyl-carrier-protein] (acyl-ACP). This enzyme utilizes acyl-ACP as fatty acyl donor, but not acyl-CoA. In Neisseria meningitidis serogroup B (strain ATCC BAA-335 / MC58), this protein is Phosphate acyltransferase.